Reading from the N-terminus, the 717-residue chain is Photosystem I P700 chlorophyll a apoprotein A1 (717 aa).

The next 8 helical transmembrane spans lie at 59 to 82, 145 to 168, 184 to 208, 280 to 298, 335 to 358, 374 to 400, 422 to 444, and 520 to 538; these read VFRAHFGQLAIILIWLSGMYFHGA, LYCTAIGALIFAALMLFAGWFHYH, LNHHLAGLLGLGSLSWAGHQVHVSL, TAHHHLAIAILFLIAGHMY, WHAQLALNLAMLGSLTIVVAHHMY, LSLFTHHMWIGGFLIVGAAAHAAIFMV, AIVSHLNWACIFLGFHSFGLYIH, and FLVHHIHAFTIHVTVLILL. [4Fe-4S] cluster contacts are provided by C562 and C571. Transmembrane regions (helical) follow at residues 578-599 and 653-675; these read HVFLGLFWMYNAISVVIFHFSW and LSAYGLLFLGAHXVWAFSLMFLF. H664 contacts chlorophyll a'. The chlorophyll a site is built by M672 and Y680. Residue W681 coordinates phylloquinone. The helical transmembrane segment at 713-717 threads the bilayer; it reads AVGVA.

The protein belongs to the PsaA/PsaB family. In terms of assembly, the PsaA/B heterodimer binds the P700 chlorophyll special pair and subsequent electron acceptors. PSI consists of a core antenna complex that captures photons, and an electron transfer chain that converts photonic excitation into a charge separation. The eukaryotic PSI reaction center is composed of at least 11 subunits. P700 is a chlorophyll a/chlorophyll a' dimer, A0 is one or more chlorophyll a, A1 is one or both phylloquinones and FX is a shared 4Fe-4S iron-sulfur center. serves as cofactor.

The protein localises to the plastid. It is found in the chloroplast thylakoid membrane. It carries out the reaction reduced [plastocyanin] + hnu + oxidized [2Fe-2S]-[ferredoxin] = oxidized [plastocyanin] + reduced [2Fe-2S]-[ferredoxin]. PsaA and PsaB bind P700, the primary electron donor of photosystem I (PSI), as well as the electron acceptors A0, A1 and FX. PSI is a plastocyanin-ferredoxin oxidoreductase, converting photonic excitation into a charge separation, which transfers an electron from the donor P700 chlorophyll pair to the spectroscopically characterized acceptors A0, A1, FX, FA and FB in turn. Oxidized P700 is reduced on the lumenal side of the thylakoid membrane by plastocyanin. The polypeptide is Photosystem I P700 chlorophyll a apoprotein A1 (Cycas revoluta (Sago palm)).